The following is a 171-amino-acid chain: UPF0398 protein Sez_1569 (171 aa).

Belongs to the UPF0398 family.

The chain is UPF0398 protein Sez_1569 from Streptococcus equi subsp. zooepidemicus (strain MGCS10565).